The following is a 465-amino-acid chain: Protein Loquacious (465 aa).

The necessary for enhancing pre-miRNA processing by Dcr-1 stretch occupies residues 1–337 (MDQENFHGSS…DSICGELEGE (337 aa)). The segment at 1–379 (MDQENFHGSS…TLKNATGKKL (379 aa)) is not required for interaction with Dcr-1. An important for homodimerization and interaction with Dcr-1 region spans residues 1-392 (MDQENFHGSS…QKTCLKNNKI (392 aa)). The segment at 129–211 (NGLAMKTPVS…DKLIGAQLPE (83 aa)) is sufficient for binding RNA. The interval 129 to 322 (NGLAMKTPVS…WMRLQETPID (194 aa)) is necessary for promoting preferential binding of Dcr-2 to the less stably base paired ends of siRNAs. Residues 135-206 (TPVSILQELL…ARALIDKLIG (72 aa)) enclose the DRBM 1 domain. The enables simultaneous binding of both DRBM 1 and 2 domains to dsRNA stretch occupies residues 209–249 (LPESPSSSAGPSVTGLTVAGSGGDGNANATGGGDASDKTVG). Residues 210 to 246 (PESPSSSAGPSVTGLTVAGSGGDGNANATGGGDASDK) form a disordered region. The span at 211–223 (ESPSSSAGPSVTG) shows a compositional bias: polar residues. Residues 220-465 (SVTGLTVAGS…LEYLKIMTKK (246 aa)) are necessary and sufficient for enhancing processing of pre-miRNAs by Dcr-1. Residues 228–242 (GSGGDGNANATGGGD) show a composition bias toward gly residues. The interval 245-322 (DKTVGNPIGW…WMRLQETPID (78 aa)) is sufficient for binding RNA. One can recognise a DRBM 2 domain in the interval 250-318 (NPIGWLQEMC…AHRMWMRLQE (69 aa)). The necessary for binding pre-miRNA stretch occupies residues 308 to 309 (AA). Residues 338–359 (PRSSENYYGELKDISVPTLTTQ) form a required for binding to Dcr-2 and to fully enhance Dcr-2 mediated cleavage of 3' overhanging termini (3'ovr) and blunt termini (BLT) dsRNAs. However, this region is dispensable for binding the dsRNA substrates region. The necessary for interaction with Dcr-1 stretch occupies residues 340-465 (SSENYYGELK…LEYLKIMTKK (126 aa)). The tract at residues 392-463 (IDYIKLLGEI…NALEYLKIMT (72 aa)) is sufficent for binding to Dcr-1. Residues 393-461 (DYIKLLGEIA…AQNALEYLKI (69 aa)) enclose the DRBM 3 domain.

In terms of assembly, homodimer. Interacts with dicer enzyme Dcr-1. As to quaternary structure, component of the miRNA-directed RNA-induced loading complex (miRLC), composed of at least Dcr-1, AGO1 and loqs isoform PB (loqs-PB), which processes pre-miRNAs and loads the resulting miRNAs into the Argonaute 1 (AGO1)-containing RNA-induced silencing complex (miRISC) to target the selective destruction of homologous RNAs. Interacts (via DRBM 3 domain) with dicer enzyme Dcr-1 (via helicase domain). Different regions of the Dcr-1-loqs-PB heterodimer collaborate to recognize, bind and position the pre-miRNA for Dcr-1 mediated cleavage. In the absence of miRNA substrates, the heterodimer favors a closed, catalytically incompetent, conformation, whereas binding of authentic pre-miRNA substrates stabilizes the relatively rare open, catalytically competent, conformation of the heterodimer. During substrate recognition, the Dcr-1 PAZ domain and pre-miRNA interact with the DRBM 1 domain of loqs-PB, which likely contributes to substrate recognition and stabilization. At the miRNA binding stage, the Dcr-1 DRBM domain and the loqs-PB DRBM domains then bind the pre-miRNA in tandem to form a tight 'belt' around the pre-miRNA stem, the pre-miRNA loop is docked in the loop-binding region formed by DUF283, DRBM and part of the helicase domain of Dcr-1, and the loqs-PB DRBM 1 and the wing domain of Dcr-1 act together to bind the 5' and 3' pre-miRNA termini within the PAZ and platform domains of Dcr-1. These interactions between the proteins and their pre-miRNA substrate stabilize a distorted form of the pre-miRNA and position the scissile phosphodiester bonds of the pre-miRNA at the RNase III catalytic cleavage sites of Dcr-1. Following Dcr-1 mediated cleavage, the miRNA duplex remains bound to loqs-PB DRBM 1, which dissociates from the Dcr-1 RNase III 1 domain but remains in contact with the PAZ and wing domains suggesting that the heterodimer presents the mature miRNA to AGO2 for loading into the RNA-induced silencing complex (miRISC). In terms of assembly, able to interact with dicer enzyme Dcr-1. However, the relevance of such an interaction is unclear in vivo and another report found that it did not interact with Dcr-1. Monomer. Interacts (via C-terminus) with dicer enzyme Dcr-2 (via N-terminus); interaction is required for RNAi activity in producing siRNAs from a subset of endo- and exo-dsRNAs, and in the alternative siRLC, the interaction enhances the binding preference of the protein for the thermodynamically more stable ends of endogenous siRNAs. Interaction with Dcr-2 is RNA independent, however the isoform must bind both dsRNA and Dcr-2 to enhance Dcr-2 cleavage activity. Does not interact with Dcr-1. Strong expression in males and females. Expression in ovaries is relatively weak. As to expression, strong expression in females and relatively weak expression in males. Strong expression in ovaries.

Its subcellular location is the cytoplasm. It localises to the cytosol. Double-stranded RNA-binding protein which can function in gene silencing by acting with Dcr-1 to enhance its ATP-independent processing of a specific subset of precursor micro-RNAs (pre-miRNAs) to mature miRNAs. Some reports found it was able to enhance the efficiency of pre-miRNA processing by Dcr-1, and can shift the cleavage site of Dcr-1 altering the length of the mature miRNAs produced by Dcr-1 alone. However, in contrast to isoform PB, it is not necessary or sufficient for enhancing miRNA biogenesis, and is not required for development or female germline stem cell (GSC) maintenance. Another report also found that it decreases binding of Dcr-1 to the miRNA substrate let-7. Functionally, double-stranded RNA-binding protein which functions in gene silencing by acting with Dcr-1 to enhance its ATP-independent processing of a specific subset of precursor micro-RNAs (pre-miRNAs) to mature miRNAs. Function is essential for development and female germline stem cell (GSC) maintenance. Functions in miRNA-mediated gene silencing by enhancing the binding affinity and specific pre-miRNA processing activity of Dcr-1, and as part of the loqs-PB-Dcr-1 complex, is involved in substrate discrimination, correctly positioning the pre-miRNA in the Dcr-1 catalytic center for cleavage, and miRNA loading into the Argonaute 1 (Ago1)-containing RNA-induced silencing complex (miRISC). Increases the binding affinity of Dcr-1 to pre-miRNAs, thereby increasing dicing efficiency and broadening the range of substrates that can be processed by the dicer. It may also confer the substrate specificity of Dcr-1 towards pre-miRNAs, as in its absence Dcr-1 displays siRNA-generating activity towards long dsRNA substrates. It can also shift the cleavage site of Dcr-1 for a small number of pre-miRNAs, changing the length of the mature miRNAs produced by Dcr-1 alone. Increases the range of pre-miRNAs that can be processed by Dcr-1, by enhancing the dicing of suboptimal hairpin substrates including ones with mismatches at the dicing site. This function may also promote the generation of novel miRNA genes as it appears to have an important role in processing evolutionarily young miRNA genes, suggesting that it may also enhance dicing of substrates that have not acquired hairpin features required for efficient miRNA processing. As newly emerged miRNAs can have deleterious or beneficial effects on fitness, this function is likely part of a regulatory system that prevents excessive emergence of active miRNA genes and thus keeps them within an optimal range. Also forms a RISC loading complex (miRLC) with Dcr-1 to mediate Ago1-loading of mature miRNAs into the RNA-induced silencing complex (miRISC). In female ovaries, required for Dcr-1 to generate the twenty-three nucleotide isomiR variant of miR-307a which is able to repress its targets Gk2 and tara. Its function is as follows. Double-stranded RNA-binding protein which has an essential role in gene silencing (RNAi) by acting with Dcr-2 to enhance its ATP-dependent processing of a subset of endogenous (endo) and exogenous (exo) dsRNAs into short interfering RNAs (siRNAs). Functions in RNAi by increasing the initial binding affinity of Dcr-2 to certain dsRNA substrates, and in the absence of r2d2, may also function in siRNA loading into the Argonaute 2 (AGO2)-containing RNA-induced silencing complex (siRISC) and guide strand selection for target silencing by the siRISC. Promotes Dcr-2 cleavage of a subset of dsRNAs, including endo-dsRNAs derived from convergent transcription, inverted repeats and transposons. Also enables Dcr-2 to produce hairpin-derived endo-siRNAs in the presence of cellular inhibitory inorganic phosphate, likely by increasing the binding affinity of the enzyme to the hairpin dsRNAs allowing the dsRNA to displace phosphate bound to Dcr-2. According to many reports, the cleavage reaction mode of Dcr-2 changes according to the termini of the dsRNA substrate, with the enzyme displaying a preference for processing blunt termini (BLT), likely non-self dsRNAs, over dsRNAs with 2 nucleotides 3' overhanging (3'ovr) termini, which are typically the structure of endo-dsRNAs. According to many reports, interaction with Loqs-PD modifies the molecular recognition mechanisms of Dcr-2 towards sub-optimal 3'ovr dsRNA substrates and thus enables the dicer to cleave endo-dsRNA templates with diverse termini. However, according to another report, the mode of cleavage reaction is not affected by the presence or absence of loqs-PD. In the absence of r2d2, may also form an alternative RISC loading complex (siRLC) with Dcr-2 to mediate AGO2-loading of endo- and exo-siRNAs into the RNA-induced silencing complex (siRISC). Many reports suggest that loqs-PD and r2d2 function independently with dcr-2 in distinct siRNA pathways, and may even compete for binding to the enzyme. Loaded siRNAs serve as a guide to direct the siRISC to complementary RNAs to degrade them or prevent their translation. The siRLC plays an important role in the ATP-dependent asymmetry sensing of the duplex, and is therefore also responsible for the selection of the strand that ultimately acts as the guide siRNA for the siRISC. Thermodynamically asymmetric endo-siRNAs can be pre-oriented in the siRLC by the Loqs-PD and DCr-2 complex, which preferentially binds to the most thermodynamically stable strand prior to loading into the siRISC. Appears to be involved in promoting double-strand breaks (DSBs) following exposure to a low-dose/dose-rate (LDR) of ionizing radiation. The protein is Protein Loquacious of Drosophila melanogaster (Fruit fly).